Reading from the N-terminus, the 90-residue chain is MRSKPPSWGHEGIISRHPTKLLPIGLPGTGDLFAGSIVAGLARGVPLPRAVAIAQNLTSRAQDHANALGAGEVVLSEPESRRALVALDPN.

Functionally, involved in nodulation of a particular host, M.lupulina. This chain is Nodulation protein NolS (nolS), found in Sinorhizobium meliloti (strain Sm2011 / Rm2011 / 2011).